A 443-amino-acid polypeptide reads, in one-letter code: MKPTLVLVGRPNVGKSTLFNRLTKSRDAIVADMPGLTRDRHYGHGKLGKKPYLVVDTGGFEPLVKEGILHEMARQTEQAIAEADAIIFVVDGRSGLTPHDKEIANKLRRIDRPVFVAVNKAEGMNSGMVEAEFHELGLGEPNAISAAHGEGIRGLVEMALESFPEPEEDEWHSDSVRVAIVGRPNVGKSTLINTLLGEERVIAFDAPGTTRDSIEIDFERGGRKYVLVDTAGMRKRGKVFESIEKFSVVKTLQSIEDANVVILMVDAQADVSDQDAHIADFILQSGRALVVAVNKWDGLDAYTREQTRQILQRKLKFLDFAKFHFISARDNIGLGNMFRSVDSAYAAAMAKMTTPRLTRVLIDAVAKQAPAKHGLFRPKPRYAHQGGSNPPIIVVHGNAVDQVTDSYRRYLEHTFREAFKLQGTPLRIQFVTAKNPFADKDKK.

EngA-type G domains are found at residues 3–167 (PTLV…PEPE) and 176–349 (VRVA…AAAM). Residues 9–16 (GRPNVGKS), 56–60 (DTGGF), 119–122 (NKAE), 182–189 (GRPNVGKS), 229–233 (DTAGM), and 294–297 (NKWD) each bind GTP. Positions 350–434 (AKMTTPRLTR…PLRIQFVTAK (85 aa)) constitute a KH-like domain.

The protein belongs to the TRAFAC class TrmE-Era-EngA-EngB-Septin-like GTPase superfamily. EngA (Der) GTPase family. As to quaternary structure, associates with the 50S ribosomal subunit.

Its function is as follows. GTPase that plays an essential role in the late steps of ribosome biogenesis. In Dechloromonas aromatica (strain RCB), this protein is GTPase Der.